The primary structure comprises 92 residues: Small ribosomal subunit protein uS19c (92 aa).

Belongs to the universal ribosomal protein uS19 family.

It localises to the plastid. The protein resides in the chloroplast. Protein S19 forms a complex with S13 that binds strongly to the 16S ribosomal RNA. The sequence is that of Small ribosomal subunit protein uS19c (rps19) from Chlorella vulgaris (Green alga).